The chain runs to 297 residues: Chelated iron transport system membrane protein YfeD (297 aa).

Transmembrane regions (helical) follow at residues 20–40 (AIVA…YLVL), 58–78 (IVLA…SGIF), 96–116 (TVMG…FSRI), 133–153 (ISLT…LVVL), 172–192 (IGLP…LTIV), 197–217 (AVGV…AFMI), 224–244 (MLVV…LISF), and 248–268 (GATG…ALIY).

Belongs to the ABC-3 integral membrane protein family.

The protein localises to the cell inner membrane. Its function is as follows. Part of an ATP-driven transport system YfeABCD for chelated iron. The sequence is that of Chelated iron transport system membrane protein YfeD (yfeD) from Yersinia pestis.